The sequence spans 778 residues: Probable protein kinase DDB_G0291133 (778 aa).

The disordered stretch occupies residues Leu129–Asn162. One can recognise a Protein kinase domain in the interval Phe177–Ile462. ATP-binding positions include Leu183–Val191 and Lys206. Asp303 serves as the catalytic Proton acceptor. 2 residues coordinate Mg(2+): Asn308 and Asp321. Disordered regions lie at residues Asn478–Asn509, His562–Gly697, and Ser757–Asn778. The segment covering Ser578–Ser590 has biased composition (acidic residues). The segment covering Ser599 to Leu651 has biased composition (low complexity). The span at Val652–Ser670 shows a compositional bias: polar residues. Residues Asn671–Asn693 show a composition bias toward low complexity. Residues Ser757–Ser766 are compositionally biased toward basic and acidic residues.

Belongs to the protein kinase superfamily. Ser/Thr protein kinase family. WEE1 subfamily.

It carries out the reaction L-seryl-[protein] + ATP = O-phospho-L-seryl-[protein] + ADP + H(+). The catalysed reaction is L-threonyl-[protein] + ATP = O-phospho-L-threonyl-[protein] + ADP + H(+). The protein is Probable protein kinase DDB_G0291133 of Dictyostelium discoideum (Social amoeba).